We begin with the raw amino-acid sequence, 642 residues long: Mini-chromosome maintenance complex-binding protein (642 aa).

Positions 151–161 (ARVSPSTSYTP) are enriched in polar residues. A disordered region spans residues 151 to 197 (ARVSPSTSYTPSRHKRSYEDDDDMDLQPNKQKDQHAGARQAGSVGGL). Ser154 is subject to Phosphoserine. A Phosphothreonine modification is found at Thr160. Ser167 and Ser298 each carry phosphoserine.

It belongs to the MCMBP family. In terms of assembly, interacts with the MCM complex: associates with the MCM3-7 complex which lacks MCM2, while it does not interact with the MCM complex when MCM2 is present (MCM2-7 complex). Interacts with the RPA complex, when composed of all RPA1, RPA2 and RPA3 components, but not with RPA1 or RPA2 alone.

It is found in the nucleus. Its function is as follows. Associated component of the MCM complex that acts as a regulator of DNA replication. Binds to the MCM complex during late S phase and promotes the disassembly of the MCM complex from chromatin, thereby acting as a key regulator of pre-replication complex (pre-RC) unloading from replicated DNA. Can dissociate the MCM complex without addition of ATP; probably acts by destabilizing interactions of each individual subunits of the MCM complex. Required for sister chromatid cohesion. This chain is Mini-chromosome maintenance complex-binding protein (MCMBP), found in Homo sapiens (Human).